The sequence spans 469 residues: Probable Xaa-Pro aminopeptidase PEPP (469 aa).

4 residues coordinate Mn(2+): Asp-265, Asp-276, Glu-399, and Glu-439.

It belongs to the peptidase M24B family. It depends on Mn(2+) as a cofactor.

The enzyme catalyses Release of any N-terminal amino acid, including proline, that is linked to proline, even from a dipeptide or tripeptide.. Its function is as follows. Catalyzes the removal of a penultimate prolyl residue from the N-termini of peptides. The polypeptide is Probable Xaa-Pro aminopeptidase PEPP (PEPP) (Coccidioides posadasii (strain RMSCC 757 / Silveira) (Valley fever fungus)).